The chain runs to 473 residues: MHFSIPETEVRSDENGSSYVAYNIHVNGVLHCRVRYSQLLGLHEQIKKEYGNNVVPAFPPKKIFTLTPAEVDQRREQLEKYMQAVRQDPILGSSEMFNSFLRKAQQETQQIPTEEVQLEIYLSNGQKVKVNILTSDQTEDVLEAVASKLDLPDELVGYFSLFLVQERADGSCTYVRKLQEFELPYVSITSLHSSDYRIILRKSYWDTAYDSDVMDDRVGLNLLYAQTVSDIDRGWILVNKEQHRQLKSLQEKGSKKEFIRLAQTLKYYGYIKFDPCITDFPEKGCHVIVGAGNNELNFHVKLPNEQMKEGSFKVTRMRCWRVTSSQVPVANGTANPSSSSKCDVKLELAFEYLMSKDRLQWVTITSQQAIMMSICLQSMVDELMVKKSGGSIKKQMQKKRLNGSLQRSDSQQAVKSPPILDSPDPNREQVVKLSTKLSSVSLRGLSSSNSAGDISGNDFHGNYAFEGIGDDDL.

One can recognise a PX domain in the interval 1-108 (MHFSIPETEV…SFLRKAQQET (108 aa)). A 1,2-diacyl-sn-glycero-3-phospho-(1D-myo-inositol-3-phosphate)-binding residues include Arg-35, Ser-37, Lys-61, and Arg-74. The 92-residue stretch at 114–205 (EEVQLEIYLS…YRIILRKSYW (92 aa)) folds into the Ras-associating domain. An FERM-like region spans residues 114-433 (EEVQLEIYLS…DPNREQVVKL (320 aa)). A PTB-like F3 module region spans residues 269–433 (GYIKFDPCIT…DPNREQVVKL (165 aa)). A disordered region spans residues 391 to 431 (SIKKQMQKKRLNGSLQRSDSQQAVKSPPILDSPDPNREQVV). Residues 403–414 (GSLQRSDSQQAV) show a composition bias toward polar residues.

This sequence belongs to the sorting nexin family. Monomer. Interacts with CCDC22, CCDC93, DSCR3 and VPS35L; the interaction with DSCR3 is direct and associates SNX17 with the retriever and CCC complexes.

It is found in the cytoplasm. It localises to the early endosome. Its subcellular location is the cytoplasmic vesicle membrane. Critical regulator of endosomal recycling of numerous surface proteins, including integrins, signaling receptor and channels. Binds to NPxY sequences in the cytoplasmic tails of target cargos. Associates with retriever and CCC complexes to prevent lysosomal degradation and promote cell surface recycling of numerous cargos such as integrins ITGB1, ITGB5 and their associated alpha subunits. Also required for maintenance of normal cell surface levels of APP and LRP1. Interacts with membranes containing phosphatidylinositol 3-phosphate (PtdIns(3P)). This Danio rerio (Zebrafish) protein is Sorting nexin-17 (snx17).